The chain runs to 281 residues: Small ribosomal subunit protein uS3 (281 aa).

In terms of domain architecture, KH type-2 spans 38 to 106 (IRRLLSTGLE…QVQLNILEVK (69 aa)). The interval 218-281 (APAGAERARR…VTHEPQIAES (64 aa)) is disordered. Residues 238–256 (SGAAGTTVTGTDAGRAVGG) show a composition bias toward low complexity.

This sequence belongs to the universal ribosomal protein uS3 family. As to quaternary structure, part of the 30S ribosomal subunit. Forms a tight complex with proteins S10 and S14.

Functionally, binds the lower part of the 30S subunit head. Binds mRNA in the 70S ribosome, positioning it for translation. This chain is Small ribosomal subunit protein uS3, found in Mycobacterium leprae (strain Br4923).